The sequence spans 150 residues: Endoribonuclease YbeY (150 aa).

Positions 113, 117, and 123 each coordinate Zn(2+).

The protein belongs to the endoribonuclease YbeY family. Zn(2+) is required as a cofactor.

The protein localises to the cytoplasm. In terms of biological role, single strand-specific metallo-endoribonuclease involved in late-stage 70S ribosome quality control and in maturation of the 3' terminus of the 16S rRNA. This is Endoribonuclease YbeY from Wolbachia sp. subsp. Drosophila simulans (strain wRi).